Reading from the N-terminus, the 213-residue chain is Large ribosomal subunit protein uL3 (213 aa).

Residue Q151 is modified to N5-methylglutamine.

Belongs to the universal ribosomal protein uL3 family. Part of the 50S ribosomal subunit. Forms a cluster with proteins L14 and L19. Methylated by PrmB.

In terms of biological role, one of the primary rRNA binding proteins, it binds directly near the 3'-end of the 23S rRNA, where it nucleates assembly of the 50S subunit. This Rhizobium johnstonii (strain DSM 114642 / LMG 32736 / 3841) (Rhizobium leguminosarum bv. viciae) protein is Large ribosomal subunit protein uL3.